Reading from the N-terminus, the 142-residue chain is NTF2-related export protein 2 (142 aa).

Residues 17 to 136 form the NTF2 domain; that stretch reads AAEEFVNIYY…WKIASDCFRF (120 aa).

Associates with NXF1, NXF2, NXF3 and NXF5.

It localises to the nucleus. It is found in the cytoplasm. Regulator of protein export for NES-containing proteins. Also plays a role in mRNA nuclear export. The chain is NTF2-related export protein 2 (Nxt2) from Mus musculus (Mouse).